Reading from the N-terminus, the 601-residue chain is Protein NRT1/ PTR FAMILY 4.4 (601 aa).

Transmembrane regions (helical) follow at residues 44-64 (AALFVLGFQAFEMMAIAAVGN) and 82-102 (ANLVTNFIGTVFLLSLLGGFL). Thr-112 carries the post-translational modification Phosphothreonine. The next 10 helical transmembrane spans lie at 113–133 (MLVFGVIEISGFILLSVQAHL), 160–180 (TLYTALCLVALGSGCLKPNII), 198–218 (FFNAAYFAFSMGQLIALTLLV), 228–248 (VGFGVSAAVMAAGMISLVAGT), 337–357 (ILLSVIPIFACTIIFNTILAQ), 386–406 (AIPYIILIFFVPLYETFFVPL), 420–440 (LQRIGTGLFLATFSMVAAALV), 453–473 (VMLSIFWIAPQFLIFGLSEMF), 493–513 (FLTAMTYCSYSFGFYLSSVLV), and 544–564 (HFYWLLASLSFINFFNYLFWS).

Belongs to the major facilitator superfamily. Proton-dependent oligopeptide transporter (POT/PTR) (TC 2.A.17) family. In terms of tissue distribution, expressed in shoots, roots and stems.

It localises to the membrane. This chain is Protein NRT1/ PTR FAMILY 4.4 (NPF4.4), found in Arabidopsis thaliana (Mouse-ear cress).